The primary structure comprises 436 residues: tRNA(Ile)-lysidine synthase (436 aa).

ATP is bound at residue S21–S26.

The protein belongs to the tRNA(Ile)-lysidine synthase family.

Its subcellular location is the cytoplasm. The catalysed reaction is cytidine(34) in tRNA(Ile2) + L-lysine + ATP = lysidine(34) in tRNA(Ile2) + AMP + diphosphate + H(+). Functionally, ligates lysine onto the cytidine present at position 34 of the AUA codon-specific tRNA(Ile) that contains the anticodon CAU, in an ATP-dependent manner. Cytidine is converted to lysidine, thus changing the amino acid specificity of the tRNA from methionine to isoleucine. The chain is tRNA(Ile)-lysidine synthase from Aster yellows witches'-broom phytoplasma (strain AYWB).